Reading from the N-terminus, the 506-residue chain is Anaerobic nitric oxide reductase transcription regulator NorR (506 aa).

At Asp-57 the chain carries 4-aspartylphosphate. A Sigma-54 factor interaction domain is found at 187 to 416 (MIGLSPAMTQ…LEHAIHRAVV (230 aa)). ATP contacts are provided by residues 215-222 (GETGTGKE) and 278-287 (ADNGTLFLDE). Residues 481-500 (WAASARALETDVANLHRLAK) constitute a DNA-binding region (H-T-H motif).

Its pathway is nitrogen metabolism; nitric oxide reduction. Its function is as follows. Required for the expression of anaerobic nitric oxide (NO) reductase, acts as a transcriptional activator for at least the norVW operon. Activation also requires sigma-54. This is Anaerobic nitric oxide reductase transcription regulator NorR from Salmonella paratyphi A (strain ATCC 9150 / SARB42).